We begin with the raw amino-acid sequence, 402 residues long: Argininosuccinate synthase (402 aa).

Leucine 7–serine 15 contacts ATP. Tyrosine 83 contributes to the L-citrulline binding site. ATP is bound at residue glycine 113. 3 residues coordinate L-aspartate: threonine 115, asparagine 119, and aspartate 120. Asparagine 119 lines the L-citrulline pocket. L-citrulline is bound by residues arginine 123, serine 169, serine 178, glutamate 253, and tyrosine 265.

This sequence belongs to the argininosuccinate synthase family. Type 1 subfamily. Homotetramer.

It localises to the cytoplasm. It carries out the reaction L-citrulline + L-aspartate + ATP = 2-(N(omega)-L-arginino)succinate + AMP + diphosphate + H(+). It functions in the pathway amino-acid biosynthesis; L-arginine biosynthesis; L-arginine from L-ornithine and carbamoyl phosphate: step 2/3. This Thermoplasma acidophilum (strain ATCC 25905 / DSM 1728 / JCM 9062 / NBRC 15155 / AMRC-C165) protein is Argininosuccinate synthase.